Reading from the N-terminus, the 223-residue chain is Phosphoribosylformylglycinamidine synthase subunit PurQ (223 aa).

The Glutamine amidotransferase type-1 domain occupies 3–223 (FAVLVFPGSN…MVKSWREQHV (221 aa)). The active-site Nucleophile is cysteine 85. Active-site residues include histidine 193 and glutamate 195.

As to quaternary structure, part of the FGAM synthase complex composed of 1 PurL, 1 PurQ and 2 PurS subunits.

The protein resides in the cytoplasm. The enzyme catalyses N(2)-formyl-N(1)-(5-phospho-beta-D-ribosyl)glycinamide + L-glutamine + ATP + H2O = 2-formamido-N(1)-(5-O-phospho-beta-D-ribosyl)acetamidine + L-glutamate + ADP + phosphate + H(+). It carries out the reaction L-glutamine + H2O = L-glutamate + NH4(+). It functions in the pathway purine metabolism; IMP biosynthesis via de novo pathway; 5-amino-1-(5-phospho-D-ribosyl)imidazole from N(2)-formyl-N(1)-(5-phospho-D-ribosyl)glycinamide: step 1/2. In terms of biological role, part of the phosphoribosylformylglycinamidine synthase complex involved in the purines biosynthetic pathway. Catalyzes the ATP-dependent conversion of formylglycinamide ribonucleotide (FGAR) and glutamine to yield formylglycinamidine ribonucleotide (FGAM) and glutamate. The FGAM synthase complex is composed of three subunits. PurQ produces an ammonia molecule by converting glutamine to glutamate. PurL transfers the ammonia molecule to FGAR to form FGAM in an ATP-dependent manner. PurS interacts with PurQ and PurL and is thought to assist in the transfer of the ammonia molecule from PurQ to PurL. The polypeptide is Phosphoribosylformylglycinamidine synthase subunit PurQ (Staphylococcus aureus (strain bovine RF122 / ET3-1)).